The sequence spans 464 residues: NADH dehydrogenase [ubiquinone] flavoprotein 1, mitochondrial (464 aa).

Residues 1–20 (MLAARRLLGWSLPARVSVRF) constitute a mitochondrion transit peptide. K81 is modified (N6-acetyllysine; alternate). K81 is subject to N6-succinyllysine; alternate. 87–96 (GRGGAGFPTG) lines the NADH pocket. K104 bears the N6-acetyllysine mark. Residue 199–247 (RGAGAYICGEETALIESIEGKQGKPRLKPPFPADVGVFGCPTTVANVET) coordinates FMN. R257 is subject to Omega-N-methylarginine. The residue at position 375 (K375) is an N6-acetyllysine. [4Fe-4S] cluster-binding residues include C379, C382, C385, and C425.

This sequence belongs to the complex I 51 kDa subunit family. As to quaternary structure, core subunit of respiratory chain NADH dehydrogenase (Complex I) which is composed of 45 different subunits. This is a component of the flavoprotein-sulfur (FP) fragment of the enzyme. Interacts with RAB5IF. It depends on FMN as a cofactor. [4Fe-4S] cluster is required as a cofactor.

It is found in the mitochondrion inner membrane. It catalyses the reaction a ubiquinone + NADH + 5 H(+)(in) = a ubiquinol + NAD(+) + 4 H(+)(out). Its function is as follows. Core subunit of the mitochondrial membrane respiratory chain NADH dehydrogenase (Complex I) which catalyzes electron transfer from NADH through the respiratory chain, using ubiquinone as an electron acceptor. Part of the peripheral arm of the enzyme, where the electrons from NADH are accepted by flavin mononucleotide (FMN) and then passed along a chain of iron-sulfur clusters by electron tunnelling to the final acceptor ubiquinone. Contains FMN, which is the initial electron acceptor as well as one iron-sulfur cluster. This Pongo pygmaeus (Bornean orangutan) protein is NADH dehydrogenase [ubiquinone] flavoprotein 1, mitochondrial.